Reading from the N-terminus, the 148-residue chain is Cytochrome c oxidase subunit 6, mitochondrial (148 aa).

The transit peptide at 1–40 (MASFFRTAVRGPSAGLFRAVARPQPIAARVSLFSTSSRFR) directs the protein to the mitochondrion.

It belongs to the cytochrome c oxidase subunit 5A family. Component of the cytochrome c oxidase (complex IV, CIV), a multisubunit enzyme composed of 11 subunits. The complex is composed of a catalytic core of 3 subunits Cox1, Cox2 and Cox3, encoded in the mitochondrial DNA, and 8 supernumerary subunits Cox4, Cox5a/Cox5, Cox6, Cox7, Cox8, Cox7a/Cox9, Cox6b/Cox12 and Cox6a/Cox13, which are encoded in the nuclear genome. The complex exists as a monomer or a dimer and forms respiratory supercomplexes (SCs) in the inner mitochondrial membrane with NADH-ubiquinone oxidoreductase (complex I, CI) and ubiquinol-cytochrome c oxidoreductase (cytochrome b-c1 complex, complex III, CIII), resulting in various different assemblies (supercomplexes I(1)IV(1), I(1)III(3)IV(2), III(2)IV(1) and III(2)IV(2) as well as larger supercomplexes of compositions like I(1)III(2)IV(5-6)).

Its subcellular location is the mitochondrion inner membrane. It participates in energy metabolism; oxidative phosphorylation. In terms of biological role, component of the cytochrome c oxidase, the last enzyme in the mitochondrial electron transport chain which drives oxidative phosphorylation. The respiratory chain contains 3 multisubunit complexes succinate dehydrogenase (complex II, CII), ubiquinol-cytochrome c oxidoreductase (cytochrome b-c1 complex, complex III, CIII) and cytochrome c oxidase (complex IV, CIV), that cooperate to transfer electrons derived from NADH and succinate to molecular oxygen, creating an electrochemical gradient over the inner membrane that drives transmembrane transport and the ATP synthase. Cytochrome c oxidase is the component of the respiratory chain that catalyzes the reduction of oxygen to water. Electrons originating from reduced cytochrome c in the intermembrane space (IMS) are transferred via the dinuclear copper A center (CU(A)) of Cox2 and heme A of Cox1 to the active site in Cox1, a binuclear center (BNC) formed by heme A3 and copper B (CU(B)). The BNC reduces molecular oxygen to 2 water molecules using 4 electrons from cytochrome c in the IMS and 4 protons from the mitochondrial matrix. This is Cytochrome c oxidase subunit 6, mitochondrial (cox-6) from Neurospora crassa (strain ATCC 24698 / 74-OR23-1A / CBS 708.71 / DSM 1257 / FGSC 987).